We begin with the raw amino-acid sequence, 544 residues long: Pyruvate kinase (544 aa).

Residue arginine 31 participates in substrate binding. The K(+) site is built by asparagine 33 and aspartate 61. 33 to 36 (NSAH) is a binding site for ATP. Position 68 (arginine 68) interacts with ATP. Glutamate 204 provides a ligand contact to Mg(2+). Residues glycine 227, aspartate 228, and threonine 260 each contribute to the substrate site. Position 228 (aspartate 228) interacts with Mg(2+).

The protein belongs to the pyruvate kinase family. As to quaternary structure, homotetramer. Mg(2+) serves as cofactor. It depends on K(+) as a cofactor.

It catalyses the reaction pyruvate + ATP = phosphoenolpyruvate + ADP + H(+). It participates in carbohydrate degradation; glycolysis; pyruvate from D-glyceraldehyde 3-phosphate: step 5/5. This is Pyruvate kinase from Thermoplasma acidophilum (strain ATCC 25905 / DSM 1728 / JCM 9062 / NBRC 15155 / AMRC-C165).